A 199-amino-acid chain; its full sequence is Urease accessory protein UreG (199 aa).

8 to 15 (GPVGSGKT) contacts GTP.

Belongs to the SIMIBI class G3E GTPase family. UreG subfamily. Homodimer. UreH, UreF and UreG form a complex that acts as a GTP-hydrolysis-dependent molecular chaperone, activating the urease apoprotein by helping to assemble the nickel containing metallocenter of UreC. The UreE protein probably delivers the nickel.

It is found in the cytoplasm. Facilitates the functional incorporation of the urease nickel metallocenter. This process requires GTP hydrolysis, probably effectuated by UreG. This Helicobacter acinonychis (strain Sheeba) protein is Urease accessory protein UreG.